The chain runs to 347 residues: METFLTHPLGPKMKERAKLDDLVVSTRIRLARNVKDTVFSPVLSKEGERQLCDRLEGRLRGLKGFEYLHMRDYDEVTRQALMEKHLISPAVAANEESAVFLSEDETISVLINEEDHLRIQTLLPGYQVKEAFELANQVDALCAESLSYAFDEQLGYLTTCPSNIGTGLRASVMLHLPGLTLTGRISPILRELRKLGYTIRGRYGEGSDAAGRLFQLSNQRTLGSHESQLLADFMEVTEQVIQAERHAREELIAHRQEELEDRFYRSYGILRYAKLLSSTEAIERLSDLHLASDLGILSDWSPPKFHELIVRLQSGFLQKHFGKTLSTQERDRERATLVRRTLDQGLV.

Positions 22–247 (LVVSTRIRLA…EQVIQAERHA (226 aa)) constitute a Phosphagen kinase C-terminal domain. ATP contacts are provided by residues 25–29 (STRIR), His-85, Arg-118, 169–173 (RASVM), and 200–205 (RGRYGE). Positions 330–335 (RDRERA) match the RDXXRA motif of the pArg binding pocket involved in allosteric regulation motif.

It belongs to the ATP:guanido phosphotransferase family.

The enzyme catalyses L-arginyl-[protein] + ATP = N(omega)-phospho-L-arginyl-[protein] + ADP + H(+). Its activity is regulated as follows. Appears to be allosterically activated by the binding of pArg-containing polypeptides to the pArg-binding pocket localized in the C-terminal domain of McsB. Functionally, catalyzes the specific phosphorylation of arginine residues in proteins. In Exiguobacterium sp. (strain ATCC BAA-1283 / AT1b), this protein is Protein-arginine kinase.